We begin with the raw amino-acid sequence, 195 residues long: ATP-dependent Clp protease proteolytic subunit (195 aa).

The active-site Nucleophile is the S98. Residue H123 is part of the active site.

Belongs to the peptidase S14 family. As to quaternary structure, fourteen ClpP subunits assemble into 2 heptameric rings which stack back to back to give a disk-like structure with a central cavity, resembling the structure of eukaryotic proteasomes.

The protein resides in the cytoplasm. The catalysed reaction is Hydrolysis of proteins to small peptides in the presence of ATP and magnesium. alpha-casein is the usual test substrate. In the absence of ATP, only oligopeptides shorter than five residues are hydrolyzed (such as succinyl-Leu-Tyr-|-NHMec, and Leu-Tyr-Leu-|-Tyr-Trp, in which cleavage of the -Tyr-|-Leu- and -Tyr-|-Trp bonds also occurs).. Cleaves peptides in various proteins in a process that requires ATP hydrolysis. Has a chymotrypsin-like activity. Plays a major role in the degradation of misfolded proteins. The sequence is that of ATP-dependent Clp protease proteolytic subunit from Sulfurovum sp. (strain NBC37-1).